The following is a 112-amino-acid chain: ATP synthase subunit c (112 aa).

2 helical membrane passes run Phe-36–Met-56 and Met-81–Ile-101.

The protein belongs to the ATPase C chain family. In terms of assembly, F-type ATPases have 2 components, F(1) - the catalytic core - and F(0) - the membrane proton channel. F(1) has five subunits: alpha(3), beta(3), gamma(1), delta(1), epsilon(1). F(0) has three main subunits: a(1), b(2) and c(10-14). The alpha and beta chains form an alternating ring which encloses part of the gamma chain. F(1) is attached to F(0) by a central stalk formed by the gamma and epsilon chains, while a peripheral stalk is formed by the delta and b chains.

Its subcellular location is the cell inner membrane. F(1)F(0) ATP synthase produces ATP from ADP in the presence of a proton or sodium gradient. F-type ATPases consist of two structural domains, F(1) containing the extramembraneous catalytic core and F(0) containing the membrane proton channel, linked together by a central stalk and a peripheral stalk. During catalysis, ATP synthesis in the catalytic domain of F(1) is coupled via a rotary mechanism of the central stalk subunits to proton translocation. Its function is as follows. Key component of the F(0) channel; it plays a direct role in translocation across the membrane. A homomeric c-ring of between 10-14 subunits forms the central stalk rotor element with the F(1) delta and epsilon subunits. In Campylobacter jejuni subsp. doylei (strain ATCC BAA-1458 / RM4099 / 269.97), this protein is ATP synthase subunit c.